Reading from the N-terminus, the 407-residue chain is Na(+)-translocating NADH-quinone reductase subunit F (407 aa).

The chain crosses the membrane as a helical span at residues 3-23; sequence IILGVAMFTGIVMVLVLLILF. In terms of domain architecture, 2Fe-2S ferredoxin-type spans 32–126; sequence GDIAVEVNGD…NLKIELPEEI (95 aa). [2Fe-2S] cluster-binding residues include C69, C75, C78, and C110. An FAD-binding FR-type domain is found at 129–269; the sequence is VKKWECEVIS…SGPFGEFFAK (141 aa).

Belongs to the NqrF family. As to quaternary structure, composed of six subunits; NqrA, NqrB, NqrC, NqrD, NqrE and NqrF. [2Fe-2S] cluster is required as a cofactor. FAD serves as cofactor.

The protein resides in the cell inner membrane. The catalysed reaction is a ubiquinone + n Na(+)(in) + NADH + H(+) = a ubiquinol + n Na(+)(out) + NAD(+). In terms of biological role, NQR complex catalyzes the reduction of ubiquinone-1 to ubiquinol by two successive reactions, coupled with the transport of Na(+) ions from the cytoplasm to the periplasm. The first step is catalyzed by NqrF, which accepts electrons from NADH and reduces ubiquinone-1 to ubisemiquinone by a one-electron transfer pathway. The sequence is that of Na(+)-translocating NADH-quinone reductase subunit F from Serratia proteamaculans (strain 568).